The chain runs to 184 residues: Ribosome-recycling factor (184 aa).

It belongs to the RRF family.

The protein resides in the cytoplasm. Functionally, responsible for the release of ribosomes from messenger RNA at the termination of protein biosynthesis. May increase the efficiency of translation by recycling ribosomes from one round of translation to another. This Acinetobacter baylyi (strain ATCC 33305 / BD413 / ADP1) protein is Ribosome-recycling factor.